The primary structure comprises 236 residues: 15,16-dihydrobiliverdin:ferredoxin oxidoreductase (236 aa).

Belongs to the HY2 family.

The catalysed reaction is 15,16-dihydrobiliverdin + oxidized 2[4Fe-4S]-[ferredoxin] = biliverdin IXalpha + reduced 2[4Fe-4S]-[ferredoxin] + 2 H(+). Functionally, catalyzes the two-electron reduction of biliverdin IX-alpha at the C15 methine bridge. The polypeptide is 15,16-dihydrobiliverdin:ferredoxin oxidoreductase (Prochlorococcus marinus (strain AS9601)).